Consider the following 539-residue polypeptide: GMP synthase [glutamine-hydrolyzing] (539 aa).

Positions 4-202 (KILILDFGSQ…VLQIAGAKPD (199 aa)) constitute a Glutamine amidotransferase type-1 domain. The active-site Nucleophile is Cys-81. Active-site residues include His-176 and Glu-178. The 193-residue stretch at 203-395 (WIMKNHIEEA…LGLPPEMVYR (193 aa)) folds into the GMPS ATP-PPase domain. 230 to 236 (SGGVDSS) lines the ATP pocket.

Homodimer.

It carries out the reaction XMP + L-glutamine + ATP + H2O = GMP + L-glutamate + AMP + diphosphate + 2 H(+). It functions in the pathway purine metabolism; GMP biosynthesis; GMP from XMP (L-Gln route): step 1/1. Functionally, catalyzes the synthesis of GMP from XMP. The polypeptide is GMP synthase [glutamine-hydrolyzing] (Burkholderia orbicola (strain AU 1054)).